Consider the following 330-residue polypeptide: Aspartate--ammonia ligase (330 aa).

Belongs to the class-II aminoacyl-tRNA synthetase family. AsnA subfamily.

It is found in the cytoplasm. The enzyme catalyses L-aspartate + NH4(+) + ATP = L-asparagine + AMP + diphosphate + H(+). The protein operates within amino-acid biosynthesis; L-asparagine biosynthesis; L-asparagine from L-aspartate (ammonia route): step 1/1. The chain is Aspartate--ammonia ligase from Enterobacter sp. (strain 638).